Consider the following 338-residue polypeptide: Legumin B (338 aa).

The interval 16–162 (SLNTKEDTAK…RQHSKGRKNG (147 aa)) is disordered. Residues 18–44 (NTKEDTAKRLRSPQDERGQIVKVEDGL) show a composition bias toward basic and acidic residues. Acidic residues-rich tracts occupy residues 82–92 (DEDEDEEEEEE) and 136–150 (EEEE…EEEE). Positions 174–321 (ENIARPSRGD…AFGLRHSQVA (148 aa)) constitute a Cupin type-1 domain.

It belongs to the 11S seed storage protein (globulins) family. As to quaternary structure, hexamer; each subunit is composed of an acidic and a basic chain derived from a single precursor and linked by a disulfide bond.

Its function is as follows. This protein found in the seeds of many leguminous and non-leguminous plants is the source of sulfur-containing amino acids in seed meals. This is Legumin B (LEGB) from Pisum sativum (Garden pea).